Here is a 170-residue protein sequence, read N- to C-terminus: Translationally-controlled tumor protein homolog (170 aa).

Positions 1 to 170 (MIIYKCIISG…FKDGLLAEKC (170 aa)) constitute a TCTP domain.

This sequence belongs to the TCTP family.

It is found in the cytoplasm. Its function is as follows. Involved in calcium binding and microtubule stabilization. The sequence is that of Translationally-controlled tumor protein homolog (tpt1) from Lateolabrax japonicus (Japanese sea perch).